We begin with the raw amino-acid sequence, 148 residues long: Transcription antitermination protein NusB (148 aa).

It belongs to the NusB family.

In terms of biological role, involved in transcription antitermination. Required for transcription of ribosomal RNA (rRNA) genes. Binds specifically to the boxA antiterminator sequence of the ribosomal RNA (rrn) operons. The chain is Transcription antitermination protein NusB from Novosphingobium aromaticivorans (strain ATCC 700278 / DSM 12444 / CCUG 56034 / CIP 105152 / NBRC 16084 / F199).